Reading from the N-terminus, the 233-residue chain is Riboflavin kinase (233 aa).

The tract at residues 1 to 99 (MSGATSTGDV…YRRIFEDPGE (99 aa)) is unknown. Residues 100-233 (LALAGTVTSG…DDEVTIRVEA (134 aa)) form a riboflavin kinase region. 109–114 (GMGEGR) contacts CDP. Residues T138 and N140 each contribute to the Mg(2+) site. Residues T200 and E208 each contribute to the FMN site. A CDP-binding site is contributed by 213-216 (VKLR).

Belongs to the archaeal riboflavin kinase family. Mg(2+) is required as a cofactor.

The catalysed reaction is riboflavin + CTP = CDP + FMN + H(+). Its pathway is cofactor biosynthesis; FMN biosynthesis; FMN from riboflavin (CTP route): step 1/1. In terms of biological role, catalyzes the CTP-dependent phosphorylation of riboflavin (vitamin B2) to form flavin mononucleotide (FMN). In Halobacterium salinarum (strain ATCC 700922 / JCM 11081 / NRC-1) (Halobacterium halobium), this protein is Riboflavin kinase (ribK).